The chain runs to 128 residues: Fluoride-specific ion channel FluC (128 aa).

4 helical membrane passes run 5–25, 35–55, 67–87, and 96–116; these read IVAI…LALA, LGTL…AVVF, LFVI…SVEV, and FGWA…LTAL. Na(+) contacts are provided by glycine 75 and threonine 78.

This sequence belongs to the fluoride channel Fluc/FEX (TC 1.A.43) family.

It localises to the cell inner membrane. It catalyses the reaction fluoride(in) = fluoride(out). Its activity is regulated as follows. Na(+) is not transported, but it plays an essential structural role and its presence is essential for fluoride channel function. Functionally, fluoride-specific ion channel. Important for reducing fluoride concentration in the cell, thus reducing its toxicity. This Burkholderia ambifaria (strain MC40-6) protein is Fluoride-specific ion channel FluC.